Here is a 334-residue protein sequence, read N- to C-terminus: Glyceraldehyde-3-phosphate dehydrogenase B (334 aa).

NAD(+) contacts are provided by residues 12 to 13 (RI), D34, and S121. D-glyceraldehyde 3-phosphate is bound by residues 149–151 (SCT), T180, 209–210 (TG), and R232. C150 acts as the Nucleophile in catalysis. N314 is a binding site for NAD(+).

This sequence belongs to the glyceraldehyde-3-phosphate dehydrogenase family. As to quaternary structure, homotetramer.

It carries out the reaction D-glyceraldehyde 3-phosphate + phosphate + NAD(+) = (2R)-3-phospho-glyceroyl phosphate + NADH + H(+). Its pathway is carbohydrate degradation; glycolysis; pyruvate from D-glyceraldehyde 3-phosphate: step 1/5. Functionally, glyceraldehyde-3-phosphate dehydrogenase; part of the gene cluster that mediates the biosynthesis of heptelidic acid (HA), a sesquiterpene lactone that acts as an inhibitor of glyceraldehyde-3-phosphatedehydrogenase (GAPDH) and a growth inhibitor of the salt-tolerant lactic acid bacteria in soy sauce brewing. The GAPDPH hepG/gdpB shows much higher resistance to HA than the GAPDH gpdA located outside of the cluster, but it does not seem to act in self-resistance. This is Glyceraldehyde-3-phosphate dehydrogenase B from Aspergillus oryzae (strain ATCC 42149 / RIB 40) (Yellow koji mold).